A 61-amino-acid chain; its full sequence is Small ribosomal subunit protein uS14 (61 aa).

Cys-24, Cys-27, Cys-40, and Cys-43 together coordinate Zn(2+).

The protein belongs to the universal ribosomal protein uS14 family. Zinc-binding uS14 subfamily. In terms of assembly, part of the 30S ribosomal subunit. Contacts proteins S3 and S10. Zn(2+) is required as a cofactor.

Functionally, binds 16S rRNA, required for the assembly of 30S particles and may also be responsible for determining the conformation of the 16S rRNA at the A site. In Acetivibrio thermocellus (strain ATCC 27405 / DSM 1237 / JCM 9322 / NBRC 103400 / NCIMB 10682 / NRRL B-4536 / VPI 7372) (Clostridium thermocellum), this protein is Small ribosomal subunit protein uS14.